Reading from the N-terminus, the 144-residue chain is Arsenate reductase ArsI1 (144 aa).

Catalysis depends on C14, which acts as the Nucleophile; cysteine thioarsenate intermediate.

It belongs to the ArsC family.

The catalysed reaction is [glutaredoxin]-dithiol + arsenate + glutathione + H(+) = glutathionyl-S-S-[glutaredoxin] + arsenite + H2O. In terms of biological role, catalyzes the reduction of arsenate [As(V)] to arsenite [As(III)]. Does not constitute the major arsenate reductase in cells: essential only in the absence of ArsC (AC P74313). The protein is Arsenate reductase ArsI1 of Synechocystis sp. (strain ATCC 27184 / PCC 6803 / Kazusa).